The primary structure comprises 323 residues: Methenyltetrahydromethanopterin cyclohydrolase (323 aa).

The protein belongs to the MCH family.

The protein resides in the cytoplasm. The catalysed reaction is 5,10-methenyl-5,6,7,8-tetrahydromethanopterin + H2O = N(5)-formyl-5,6,7,8-tetrahydromethanopterin + H(+). It participates in one-carbon metabolism; methanogenesis from CO(2); 5,10-methenyl-5,6,7,8-tetrahydromethanopterin from CO(2): step 3/3. In terms of biological role, catalyzes the reversible interconversion of 5-formyl-H(4)MPT to methenyl-H(4)MPT(+). The protein is Methenyltetrahydromethanopterin cyclohydrolase of Methanobrevibacter smithii (strain ATCC 35061 / DSM 861 / OCM 144 / PS).